We begin with the raw amino-acid sequence, 439 residues long: D-inositol 3-phosphate glycosyltransferase (439 aa).

Histidine 21 is a 1D-myo-inositol 3-phosphate binding site. UDP-N-acetyl-alpha-D-glucosamine is bound by residues 27-28 and glycine 35; that span reads QP. 1D-myo-inositol 3-phosphate-binding positions include 32-37, lysine 90, tyrosine 123, threonine 147, and arginine 167; that span reads DAGGMN. 3 residues coordinate UDP-N-acetyl-alpha-D-glucosamine: arginine 241, lysine 246, and glutamine 299. Mg(2+) contacts are provided by tyrosine 308, arginine 309, and alanine 311. 2 residues coordinate UDP-N-acetyl-alpha-D-glucosamine: glutamate 321 and glutamate 329. A Mg(2+)-binding site is contributed by threonine 335.

The protein belongs to the glycosyltransferase group 1 family. MshA subfamily. In terms of assembly, homodimer.

The catalysed reaction is 1D-myo-inositol 3-phosphate + UDP-N-acetyl-alpha-D-glucosamine = 1D-myo-inositol 2-acetamido-2-deoxy-alpha-D-glucopyranoside 3-phosphate + UDP + H(+). Catalyzes the transfer of a N-acetyl-glucosamine moiety to 1D-myo-inositol 3-phosphate to produce 1D-myo-inositol 2-acetamido-2-deoxy-glucopyranoside 3-phosphate in the mycothiol biosynthesis pathway. This Mycobacterium sp. (strain KMS) protein is D-inositol 3-phosphate glycosyltransferase.